The primary structure comprises 446 residues: Glutamate--tRNA ligase (446 aa).

The short motif at 9 to 19 (PSPTGLLHVGN) is the 'HIGH' region element. The 'KMSKS' region motif lies at 240–244 (GLSKR). K243 lines the ATP pocket.

Belongs to the class-I aminoacyl-tRNA synthetase family. Glutamate--tRNA ligase type 1 subfamily. In terms of assembly, monomer.

It is found in the cytoplasm. The catalysed reaction is tRNA(Glu) + L-glutamate + ATP = L-glutamyl-tRNA(Glu) + AMP + diphosphate. In terms of biological role, catalyzes the attachment of glutamate to tRNA(Glu) in a two-step reaction: glutamate is first activated by ATP to form Glu-AMP and then transferred to the acceptor end of tRNA(Glu). This Azospirillum brasilense protein is Glutamate--tRNA ligase.